A 365-amino-acid chain; its full sequence is tRNA dimethylallyltransferase (365 aa).

An ATP-binding site is contributed by 23-30; the sequence is APTASGKT. 25–30 contributes to the substrate binding site; it reads TASGKT. Interaction with substrate tRNA stretches follow at residues 48 to 51, 172 to 176, and 256 to 261; these read DSAL, QRITR, and RCVGYR.

It belongs to the IPP transferase family. Monomer. Mg(2+) is required as a cofactor.

It carries out the reaction adenosine(37) in tRNA + dimethylallyl diphosphate = N(6)-dimethylallyladenosine(37) in tRNA + diphosphate. In terms of biological role, catalyzes the transfer of a dimethylallyl group onto the adenine at position 37 in tRNAs that read codons beginning with uridine, leading to the formation of N6-(dimethylallyl)adenosine (i(6)A). The sequence is that of tRNA dimethylallyltransferase from Psychrobacter sp. (strain PRwf-1).